Reading from the N-terminus, the 435-residue chain is Beta-arrestin arr-1 (435 aa).

The interval 358 to 382 is disordered; sequence LTHSKPPESPERTDRGLPSIEATNG. Positions 362 to 372 are enriched in basic and acidic residues; that stretch reads KPPESPERTDR. The Clathrin box motif lies at 390-394; that stretch reads LIQLH. Residues 404-414 carry the [DE]-X(1,2)-F-X-X-[FL]-X-X-X-R motif motif; it reads DLIFEDFARMR. A disordered region spans residues 416 to 435; the sequence is HGNDSEDQPSPSANLPPSLL. The segment covering 424–435 has biased composition (low complexity); the sequence is PSPSANLPPSLL.

This sequence belongs to the arrestin family. As to quaternary structure, component of a complex composed of arr-1, daf-18 and mpz-1. Within the complex, interacts (via C-terminus) with mpz-1 (via PDZ domain) and phosphatase daf-18. May interact (via C-terminus) with clathrin chc-1 and beta-2 adaptin (AP2) apb-1. As to expression, expressed in head neurons, nerve ring and ventral nerve cord (at protein level). Expressed in the nervous system including the nerve ring and the ventral and dorsal nerve cords. Highly expressed in amphid chemosensory neurons AWA, AWB, AWC, ADL and ASH, and in hermaphrodite specific neuron HSN. Also expressed in the intestine.

It is found in the perikaryon. The protein resides in the cell projection. Its subcellular location is the dendrite. Adapter protein required for olfactory adaptation and recovery to volatile odorants, probably by desensitization of G-protein coupled receptors (GPCR). May play a role in clathrin-mediated GPCR endocytosis. Acts as a positive regulator of insulin-like daf-2 signaling pathway probably by forming a complex with mpz-1 and phosphatase daf-18 likely resulting in daf-18 inhibition. Involved in egg-laying. The sequence is that of Beta-arrestin arr-1 from Caenorhabditis elegans.